A 103-amino-acid chain; its full sequence is Large ribosomal subunit protein uL24 (103 aa).

It belongs to the universal ribosomal protein uL24 family. As to quaternary structure, part of the 50S ribosomal subunit.

Its function is as follows. One of two assembly initiator proteins, it binds directly to the 5'-end of the 23S rRNA, where it nucleates assembly of the 50S subunit. One of the proteins that surrounds the polypeptide exit tunnel on the outside of the subunit. This is Large ribosomal subunit protein uL24 from Exiguobacterium sibiricum (strain DSM 17290 / CCUG 55495 / CIP 109462 / JCM 13490 / 255-15).